Reading from the N-terminus, the 295-residue chain is Bifunctional protein FolD (295 aa).

Residues 166–168 (GRS), serine 191, and isoleucine 232 each bind NADP(+).

Belongs to the tetrahydrofolate dehydrogenase/cyclohydrolase family. In terms of assembly, homodimer.

It carries out the reaction (6R)-5,10-methylene-5,6,7,8-tetrahydrofolate + NADP(+) = (6R)-5,10-methenyltetrahydrofolate + NADPH. The enzyme catalyses (6R)-5,10-methenyltetrahydrofolate + H2O = (6R)-10-formyltetrahydrofolate + H(+). It functions in the pathway one-carbon metabolism; tetrahydrofolate interconversion. Catalyzes the oxidation of 5,10-methylenetetrahydrofolate to 5,10-methenyltetrahydrofolate and then the hydrolysis of 5,10-methenyltetrahydrofolate to 10-formyltetrahydrofolate. The chain is Bifunctional protein FolD from Rhodopseudomonas palustris (strain ATCC BAA-98 / CGA009).